A 372-amino-acid chain; its full sequence is Oxysterol-binding protein 3 (372 aa).

The segment covering 1 to 10 (MGKSDRKLTE) has biased composition (basic and acidic residues). The segment at 1–25 (MGKSDRKLTEENSIENGVKPGKLTE) is disordered.

This sequence belongs to the OSBP family.

This Dictyostelium discoideum (Social amoeba) protein is Oxysterol-binding protein 3 (osbC).